The sequence spans 374 residues: Carbamoyl phosphate synthase small chain (374 aa).

Residues 1 to 186 (MTEHAILVLE…DRNECKRAAP (186 aa)) are CPSase. L-glutamine-binding residues include S47, G237, and G239. Residues 189–374 (KVVAYDYGVK…RFITMMAAQS (186 aa)) enclose the Glutamine amidotransferase type-1 domain. The active-site Nucleophile is C265. Positions 266, 269, 307, 309, and 310 each coordinate L-glutamine. Catalysis depends on residues H349 and E351.

The protein belongs to the CarA family. In terms of assembly, composed of two chains; the small (or glutamine) chain promotes the hydrolysis of glutamine to ammonia, which is used by the large (or ammonia) chain to synthesize carbamoyl phosphate. Tetramer of heterodimers (alpha,beta)4.

It carries out the reaction hydrogencarbonate + L-glutamine + 2 ATP + H2O = carbamoyl phosphate + L-glutamate + 2 ADP + phosphate + 2 H(+). The catalysed reaction is L-glutamine + H2O = L-glutamate + NH4(+). It participates in amino-acid biosynthesis; L-arginine biosynthesis; carbamoyl phosphate from bicarbonate: step 1/1. The protein operates within pyrimidine metabolism; UMP biosynthesis via de novo pathway; (S)-dihydroorotate from bicarbonate: step 1/3. Its function is as follows. Small subunit of the glutamine-dependent carbamoyl phosphate synthetase (CPSase). CPSase catalyzes the formation of carbamoyl phosphate from the ammonia moiety of glutamine, carbonate, and phosphate donated by ATP, constituting the first step of 2 biosynthetic pathways, one leading to arginine and/or urea and the other to pyrimidine nucleotides. The small subunit (glutamine amidotransferase) binds and cleaves glutamine to supply the large subunit with the substrate ammonia. The polypeptide is Carbamoyl phosphate synthase small chain (Xylella fastidiosa (strain Temecula1 / ATCC 700964)).